A 273-amino-acid polypeptide reads, in one-letter code: NH(3)-dependent NAD(+) synthetase (273 aa).

An ATP-binding site is contributed by 47–54; that stretch reads GISGGQDS. Aspartate 53 serves as a coordination point for Mg(2+). Arginine 139 serves as a coordination point for deamido-NAD(+). Threonine 159 contributes to the ATP binding site. Residue glutamate 164 participates in Mg(2+) binding. Lysine 172 and aspartate 179 together coordinate deamido-NAD(+). The ATP site is built by lysine 188 and threonine 210. 259 to 260 is a binding site for deamido-NAD(+); sequence HK.

This sequence belongs to the NAD synthetase family. As to quaternary structure, homodimer.

The enzyme catalyses deamido-NAD(+) + NH4(+) + ATP = AMP + diphosphate + NAD(+) + H(+). Its pathway is cofactor biosynthesis; NAD(+) biosynthesis; NAD(+) from deamido-NAD(+) (ammonia route): step 1/1. Its function is as follows. Catalyzes the ATP-dependent amidation of deamido-NAD to form NAD. Uses ammonia as a nitrogen source. The protein is NH(3)-dependent NAD(+) synthetase of Staphylococcus aureus (strain N315).